A 95-amino-acid chain; its full sequence is Aspartyl/glutamyl-tRNA(Asn/Gln) amidotransferase subunit C (95 aa).

Belongs to the GatC family. Heterotrimer of A, B and C subunits.

The catalysed reaction is L-glutamyl-tRNA(Gln) + L-glutamine + ATP + H2O = L-glutaminyl-tRNA(Gln) + L-glutamate + ADP + phosphate + H(+). It catalyses the reaction L-aspartyl-tRNA(Asn) + L-glutamine + ATP + H2O = L-asparaginyl-tRNA(Asn) + L-glutamate + ADP + phosphate + 2 H(+). Functionally, allows the formation of correctly charged Asn-tRNA(Asn) or Gln-tRNA(Gln) through the transamidation of misacylated Asp-tRNA(Asn) or Glu-tRNA(Gln) in organisms which lack either or both of asparaginyl-tRNA or glutaminyl-tRNA synthetases. The reaction takes place in the presence of glutamine and ATP through an activated phospho-Asp-tRNA(Asn) or phospho-Glu-tRNA(Gln). The sequence is that of Aspartyl/glutamyl-tRNA(Asn/Gln) amidotransferase subunit C from Maricaulis maris (strain MCS10) (Caulobacter maris).